Reading from the N-terminus, the 371-residue chain is Peptidyl-prolyl cis-trans isomerase D (371 aa).

The PPIase cyclophilin-type domain maps to 11 to 172; sequence FFDIQIGNEK…KDVTIVECGE (162 aa). Residues 175–195 are disordered; it reads GQDYDDADKQTPDATGDPYED. TPR repeat units lie at residues 214–247, 267–300, and 308–341; these read ASEL…LHEF, FALH…ANAA, and AKAY…APGD.

This sequence belongs to the cyclophilin-type PPIase family. PPIase D subfamily.

It localises to the cytoplasm. It carries out the reaction [protein]-peptidylproline (omega=180) = [protein]-peptidylproline (omega=0). In terms of biological role, PPIases accelerate the folding of proteins. It catalyzes the cis-trans isomerization of proline imidic peptide bonds in oligopeptides. This is Peptidyl-prolyl cis-trans isomerase D (cpr6) from Aspergillus oryzae (strain ATCC 42149 / RIB 40) (Yellow koji mold).